Consider the following 273-residue polypeptide: Outer surface protein A (273 aa).

The first 16 residues, 1–16 (MKKYLLGIGLILALIA), serve as a signal peptide directing secretion. A lipid anchor (N-palmitoyl cysteine) is attached at C17. A lipid anchor (S-diacylglycerol cysteine) is attached at C17.

Belongs to the OspA lipoprotein family.

It localises to the cell outer membrane. Its subcellular location is the cell surface. This is Outer surface protein A from Borreliella burgdorferi (Lyme disease spirochete).